Reading from the N-terminus, the 317-residue chain is Transcription factor EC (317 aa).

Positions 1 to 90 (MTFDCRVCDQ…GLTDAPCPSI (90 aa)) are necessary for transcriptional transactivation. Residues 110-163 (QKKDNHNLIERRRRYNINYRIKELGTLIPKSNDPDMRWNKGTILKASVDYIKWL) form the bHLH domain. Residues 242–317 (TSPEFYEQAV…SLSSEDGDEL (76 aa)) are necessary for transcriptional transactivation.

Belongs to the MiT/TFE family. In terms of assembly, homodimer. Forms heterodimers with MITF. Interacts with MITF. Forms heterodimers with TFE3. In terms of tissue distribution, expressed in osteoclast-like cells (at protein level). Expressed in cells of the mononuclear phagocyte lineage. Expressed in macrophages and in osteoclast-like cells.

The protein localises to the nucleus. Functionally, transcriptional regulator that acts as a repressor or an activator. Acts as a transcriptional transactivator on the proximal promoter region of the tartrate-resistant acid phosphatase (TRAP) E-box containing promoter. Collaborates with MITF in target gene activation. Acts as a transcriptional repressor on minimal promoter containing element F (that includes an E-box sequence). Binds to element F in an E-box sequence-specific manner. Acts as a transcriptional repressor on minimal promoter containing mu E3 enhancer sequence. Binds to mu E3 DNA sequence of the immunoglobulin heavy-chain gene enhancer. Binds DNA in a homo- or heterodimeric form. This is Transcription factor EC (Tfec) from Mus musculus (Mouse).